Consider the following 350-residue polypeptide: tRNA-splicing endonuclease (350 aa).

Active-site residues include Y286, H297, and K328.

The protein belongs to the tRNA-intron endonuclease family. Archaeal long subfamily. As to quaternary structure, homodimer.

The catalysed reaction is pretRNA = a 3'-half-tRNA molecule with a 5'-OH end + a 5'-half-tRNA molecule with a 2',3'-cyclic phosphate end + an intron with a 2',3'-cyclic phosphate and a 5'-hydroxyl terminus.. Endonuclease that removes tRNA introns. Cleaves pre-tRNA at the 5'- and 3'-splice sites to release the intron. The products are an intron and two tRNA half-molecules bearing 2',3' cyclic phosphate and 5'-OH termini. Recognizes a pseudosymmetric substrate in which 2 bulged loops of 3 bases are separated by a stem of 4 bp. The sequence is that of tRNA-splicing endonuclease from Methanosarcina barkeri (strain Fusaro / DSM 804).